We begin with the raw amino-acid sequence, 402 residues long: Plasminogen activator inhibitor 1 (402 aa).

Positions 1-22 are cleaved as a signal peptide; sequence MQMSSALACLILGLVLVSGKGF. Residues Asn-232, Asn-288, and Asn-352 are each glycosylated (N-linked (GlcNAc...) asparagine).

The protein belongs to the serpin family. As to quaternary structure, forms a heterodimer with TMPRSS7. Interacts with VTN. Binds LRP1B; binding is followed by internalization and degradation. Interacts with PPP1CB. In complex with PLAU/uPA, interacts with PLAUR/uPAR. Interacts with SORL1 and LRP1, either alone or in complex with PLAU; these interactions are abolished in the presence of LRPAP1/RAP. The ternary complex composed of PLAUR-PLAU-PAI1 also interacts with SORL1. Interacts with PLAT/tPA. Also interacts with SORL1, when complexed to PLAT/tPA.

The protein resides in the secreted. Its function is as follows. Serine protease inhibitor. Inhibits TMPRSS7. Is a primary inhibitor of tissue-type plasminogen activator (PLAT) and urokinase-type plasminogen activator (PLAU). As PLAT inhibitor, it is required for fibrinolysis down-regulation and is responsible for the controlled degradation of blood clots. As PLAU inhibitor, it is involved in the regulation of cell adhesion and spreading. Acts as a regulator of cell migration, independently of its role as protease inhibitor. It is required for stimulation of keratinocyte migration during cutaneous injury repair. Involved in cellular and replicative senescence. Plays a role in alveolar type 2 cells senescence in the lung. Is involved in the regulation of cementogenic differentiation of periodontal ligament stem cells, and regulates odontoblast differentiation and dentin formation during odontogenesis. This is Plasminogen activator inhibitor 1 (Serpine1) from Mus musculus (Mouse).